Here is a 675-residue protein sequence, read N- to C-terminus: Potassium-transporting ATPase ATP-binding subunit (675 aa).

The next 4 helical transmembrane spans lie at 34–54 (IMFV…FPDI), 65–85 (LITI…SEAF), 216–236 (IALF…IVTL), and 245–265 (LILP…TTIG). Residue D304 is the 4-aspartylphosphate intermediate of the active site. ATP is bound by residues D341, E345, 372–379 (FTAETRMS), and K390. 2 residues coordinate Mg(2+): D513 and D517. The next 3 membrane-spanning stretches (helical) occupy residues 569 to 591 (ALTT…ALMM), 611 to 631 (AIIS…PIAM), and 644 to 664 (IFIN…FLGI).

This sequence belongs to the cation transport ATPase (P-type) (TC 3.A.3) family. Type IA subfamily. The system is composed of three essential subunits: KdpA, KdpB and KdpC.

Its subcellular location is the cell membrane. The catalysed reaction is K(+)(out) + ATP + H2O = K(+)(in) + ADP + phosphate + H(+). Functionally, part of the high-affinity ATP-driven potassium transport (or Kdp) system, which catalyzes the hydrolysis of ATP coupled with the electrogenic transport of potassium into the cytoplasm. This subunit is responsible for energy coupling to the transport system and for the release of the potassium ions to the cytoplasm. The protein is Potassium-transporting ATPase ATP-binding subunit of Staphylococcus aureus (strain Newman).